The following is a 78-amino-acid chain: MIKEKILSIVAFCYGIAYSKLSEETKFIEDLSADSLSLIEMLDMISFEFNLRIDESALEHIITIGDLISVVKNSTKSI.

Positions 1-75 constitute a Carrier domain; it reads MIKEKILSIV…DLISVVKNST (75 aa). Position 35 is an O-(pantetheine 4'-phosphoryl)serine (serine 35).

Belongs to the acyl carrier protein (ACP) family. In terms of processing, 4'-phosphopantetheine is transferred from CoA to a specific serine of apo-ACP by AcpS. This modification is essential for activity because fatty acids are bound in thioester linkage to the sulfhydryl of the prosthetic group.

It localises to the cytoplasm. It participates in lipid metabolism; fatty acid biosynthesis. Its function is as follows. Carrier of the growing fatty acid chain in fatty acid biosynthesis. In Shigella flexneri, this protein is Acyl carrier protein (acpP).